The chain runs to 303 residues: Hemolysin E (303 aa).

Cysteine 87 and cysteine 285 form a disulfide bridge. A helical membrane pass occupies residues 183 to 203; it reads AGVVAGPFGLIISYSIAAGVV.

The protein belongs to the hemolysin E family. As to quaternary structure, monomer and oligomer. In periplasm, it is present as a monomer, while in outer membrane vesicles, it oligomerizes to form a pore structure that is active. The pore is formed by a dodecamer. In terms of processing, in periplasm, it forms a disulfide bond, which prevents the oligomerization. In outer membrane vesicles, the redox status prevents formation of the disulfide bond, leading to oligomerization and pore formation.

It localises to the secreted. The protein localises to the periplasm. The protein resides in the host cell membrane. Functionally, toxin, which has some hemolytic activity towards mammalian cells. Acts by forming a pore-like structure upon contact with mammalian cells. The protein is Hemolysin E (hlyE) of Escherichia coli O157:H7.